Reading from the N-terminus, the 238-residue chain is SPbeta prophage-derived uncharacterized protein YorM (238 aa).

A signal peptide spans 1-37 (MFKKLIDKHKKYVYHRINKMALFATIGLLGVGLVYSA). Positions 111–121 (TKTKKVQKTNT) are enriched in basic residues. The interval 111–132 (TKTKKVQKTNTKRNLDKAVSKS) is disordered.

In Bacillus subtilis (strain 168), this protein is SPbeta prophage-derived uncharacterized protein YorM (yorM).